The sequence spans 239 residues: ATP synthase subunit a (239 aa).

The next 5 helical transmembrane spans lie at 17 to 37 (GTVCMMVLLTCLIVFFLVYFF), 75 to 95 (FHLLAFTLFLFVFVANNIGLI), 113 to 133 (DPFVTLTLAFIMITLTHLFGV), 182 to 202 (LLTLIANMMNNLGWFSLPLAI), and 206 to 226 (MVWIAFSLFIGSIQAFVFVTL).

It belongs to the ATPase A chain family. In terms of assembly, F-type ATPases have 2 components, CF(1) - the catalytic core - and CF(0) - the membrane proton channel. CF(1) has five subunits: alpha(3), beta(3), gamma(1), delta(1), epsilon(1). CF(0) has three main subunits: a(1), b(2) and c(9-12). The alpha and beta chains form an alternating ring which encloses part of the gamma chain. CF(1) is attached to CF(0) by a central stalk formed by the gamma and epsilon chains, while a peripheral stalk is formed by the delta and b chains.

It is found in the cell membrane. Key component of the proton channel; it plays a direct role in the translocation of protons across the membrane. The chain is ATP synthase subunit a from Enterococcus hirae (strain ATCC 9790 / DSM 20160 / JCM 8729 / LMG 6399 / NBRC 3181 / NCIMB 6459 / NCDO 1258 / NCTC 12367 / WDCM 00089 / R).